A 352-amino-acid polypeptide reads, in one-letter code: Inhibin beta C chain (352 aa).

The first 18 residues, 1–18 (MTSSLLLAFLLLAPTTVA), serve as a signal peptide directing secretion. The propeptide occupies 19-236 (TPRAGGQCPA…VGGKHQIHRR (218 aa)). N-linked (GlcNAc...) asparagine glycans are attached at residues Asn-110, Asn-143, and Asn-161. 4 cysteine pairs are disulfide-bonded: Cys-240–Cys-248, Cys-247–Cys-317, Cys-276–Cys-349, and Cys-280–Cys-351.

The protein belongs to the TGF-beta family. As to quaternary structure, homodimeric or heterodimeric through association with alpha and beta subunits, linked by one or more disulfide bonds. Inhibins are heterodimers of one alpha and one beta subunit. Activins are homo- or heterodimers of beta subunits only. In terms of tissue distribution, expressed in benign prostatic hyperplasia.

It localises to the secreted. Its function is as follows. Inhibins and activins inhibit and activate, respectively, the secretion of follitropin by the pituitary gland. Inhibins/activins are involved in regulating a number of diverse functions such as hypothalamic and pituitary hormone secretion, gonadal hormone secretion, germ cell development and maturation, erythroid differentiation, insulin secretion, nerve cell survival, embryonic axial development or bone growth, depending on their subunit composition. Inhibins appear to oppose the functions of activins. The sequence is that of Inhibin beta C chain (INHBC) from Homo sapiens (Human).